A 527-amino-acid polypeptide reads, in one-letter code: Phosphoethanolamine transferase OpgE (527 aa).

Residues 1 to 33 (MNLTLKESLVTRSRVFSPWTAFYFLQSLLINLG) are Periplasmic-facing. A helical transmembrane segment spans residues 34 to 54 (LGYPFSLLYTAAFTAILLLLW). Residues 55-62 (RTLPRVQK) are Cytoplasmic-facing. A helical transmembrane segment spans residues 63–83 (VLVGVSSLVAACYFPFAQAYG). Over 84–106 (APNFNTLLALHSTNMEESTEILT) the chain is Periplasmic. Residues 107-127 (IFPWYSYLVGLFIFALGVIAI) traverse the membrane as a helical segment. Residues 128–146 (RRKKENEKARWNTFDSLCL) lie on the Cytoplasmic side of the membrane. Residues 147–167 (VFSVATFFVAPVQNLAWGGVF) traverse the membrane as a helical segment. Residues 168–527 (KLKDTGYPVF…LGTDIFDPKP (360 aa)) lie on the Periplasmic side of the membrane.

Belongs to the phosphoethanolamine transferase family.

It localises to the cell inner membrane. Its pathway is glycan metabolism; osmoregulated periplasmic glucan (OPG) biosynthesis. Functionally, catalyzes the addition of a phosphoethanolamine moiety to the osmoregulated periplasmic glucan (OPG) backbone. The chain is Phosphoethanolamine transferase OpgE (opgE) from Escherichia coli (strain K12).